The primary structure comprises 365 residues: Chorismate synthase (365 aa).

2 residues coordinate NADP(+): R48 and R54. Residues 131–133, 243–244, G288, 303–307, and R329 each bind FMN; these read RSS, NA, and KPTSS.

This sequence belongs to the chorismate synthase family. In terms of assembly, homotetramer. FMNH2 serves as cofactor.

It catalyses the reaction 5-O-(1-carboxyvinyl)-3-phosphoshikimate = chorismate + phosphate. It functions in the pathway metabolic intermediate biosynthesis; chorismate biosynthesis; chorismate from D-erythrose 4-phosphate and phosphoenolpyruvate: step 7/7. Functionally, catalyzes the anti-1,4-elimination of the C-3 phosphate and the C-6 proR hydrogen from 5-enolpyruvylshikimate-3-phosphate (EPSP) to yield chorismate, which is the branch point compound that serves as the starting substrate for the three terminal pathways of aromatic amino acid biosynthesis. This reaction introduces a second double bond into the aromatic ring system. This chain is Chorismate synthase, found in Sinorhizobium fredii (strain NBRC 101917 / NGR234).